A 974-amino-acid polypeptide reads, in one-letter code: UvrABC system protein A (974 aa).

34 to 41 (GLSGSGKS) serves as a coordination point for ATP. ABC transporter domains are found at residues 331-610 (WARS…TNSL) and 630-959 (ISKT…QFLK). An ATP-binding site is contributed by 663–670 (GVSGGGKS). The C4-type zinc-finger motif lies at 762–788 (CEACQGDGVIKIEMHFLPDVYVTCDVC).

The protein belongs to the ABC transporter superfamily. UvrA family. Forms a heterotetramer with UvrB during the search for lesions.

The protein localises to the cytoplasm. The UvrABC repair system catalyzes the recognition and processing of DNA lesions. UvrA is an ATPase and a DNA-binding protein. A damage recognition complex composed of 2 UvrA and 2 UvrB subunits scans DNA for abnormalities. When the presence of a lesion has been verified by UvrB, the UvrA molecules dissociate. In Brucella melitensis biotype 1 (strain ATCC 23456 / CCUG 17765 / NCTC 10094 / 16M), this protein is UvrABC system protein A.